Consider the following 284-residue polypeptide: NADH-cytochrome b5 reductase 1 (284 aa).

Residues 8–28 (PFIIFATVAAIISSAVAYYFF) form a helical membrane-spanning segment. The FAD-binding FR-type domain occupies 41–144 (NDFQKFPLIE…RGPKGFFTYT (104 aa)). Residues 124–139 (ESKKIGETIDIRGPKG) and 150–182 (SFGMIAGGTGITPMYQILTAILRNPEDKTKVSL) contribute to the FAD site.

Belongs to the flavoprotein pyridine nucleotide cytochrome reductase family. As to quaternary structure, monomer. Component of the 2-(3-amino-3-carboxypropyl)histidine synthase complex composed of DPH1, DPH2, DPH3 and a NADH-dependent reductase, predominantly CBR1. FAD serves as cofactor.

The protein resides in the mitochondrion outer membrane. It catalyses the reaction 2 Fe(III)-[cytochrome b5] + NADH = 2 Fe(II)-[cytochrome b5] + NAD(+) + H(+). It carries out the reaction 2 Fe(3+)-[Dph3] + NADH = 2 Fe(2+)-[Dph3] + NAD(+) + H(+). The protein operates within protein modification; peptidyl-diphthamide biosynthesis. Functionally, NADH-dependent reductase for DPH3 and cytochrome b5. Required for the first step of diphthamide biosynthesis, a post-translational modification of histidine which occurs in elongation factor 2. DPH1 and DPH2 transfer a 3-amino-3-carboxypropyl (ACP) group from S-adenosyl-L-methionine (SAM) to a histidine residue, the reaction is assisted by a reduction system comprising DPH3 and a NADH-dependent reductase, predominantly CBR1. By reducing DPH3, also involved in the formation of the tRNA wobble base modification mcm5s 2U (5-methoxycarbonylmethyl-2-thiouridine), mediated by the elongator complex. The cytochrome b5/NADH cytochrome b5 reductase electron transfer system supports the catalytic activity of several sterol biosynthetic enzymes. This is NADH-cytochrome b5 reductase 1 (CBR1) from Debaryomyces hansenii (strain ATCC 36239 / CBS 767 / BCRC 21394 / JCM 1990 / NBRC 0083 / IGC 2968) (Yeast).